Reading from the N-terminus, the 349-residue chain is Phosphoribosylformylglycinamidine cyclo-ligase (349 aa).

Belongs to the AIR synthase family.

The protein resides in the cytoplasm. It carries out the reaction 2-formamido-N(1)-(5-O-phospho-beta-D-ribosyl)acetamidine + ATP = 5-amino-1-(5-phospho-beta-D-ribosyl)imidazole + ADP + phosphate + H(+). Its pathway is purine metabolism; IMP biosynthesis via de novo pathway; 5-amino-1-(5-phospho-D-ribosyl)imidazole from N(2)-formyl-N(1)-(5-phospho-D-ribosyl)glycinamide: step 2/2. This Listeria monocytogenes serotype 4a (strain HCC23) protein is Phosphoribosylformylglycinamidine cyclo-ligase.